The primary structure comprises 172 residues: C-phycocyanin beta subunit (172 aa).

Asparagine 72 is modified (N4-methylasparagine). 2 residues coordinate (2R,3E)-phycocyanobilin: cysteine 82 and cysteine 153.

Belongs to the phycobiliprotein family. As to quaternary structure, the alpha and beta subunits exhibit high affinity for one another and form heterodimers. These heterodimers form heterohexamers of 3 alpha and 3 beta subunits which, in turn, aggregate into a heterododecamer consisting of 2 heterohexamers. Contains two covalently linked bilin chromophores.

It is found in the cellular thylakoid membrane. In terms of biological role, light-harvesting photosynthetic bile pigment-protein from the phycobiliprotein complex (phycobilisome, PBS). Phycocyanin is the major phycobiliprotein in the PBS rod. The polypeptide is C-phycocyanin beta subunit (cpcB) (Arthrospira platensis (Spirulina platensis)).